The primary structure comprises 372 residues: Dual-specificity RNA methyltransferase RlmN (372 aa).

The active-site Proton acceptor is the Glu97. In terms of domain architecture, Radical SAM core spans 103–340; it reads ETDRKTLCVS…AVVRKNRGTD (238 aa). A disulfide bond links Cys110 and Cys345. 3 residues coordinate [4Fe-4S] cluster: Cys117, Cys121, and Cys124. Residues 172 to 173, Ser204, 226 to 228, and Asn302 each bind S-adenosyl-L-methionine; these read GE and SLN. Cys345 serves as the catalytic S-methylcysteine intermediate. The interval 350–372 is disordered; sequence AEGGPGDPRRRAAAALTGTPAAG. The segment covering 362–372 has biased composition (low complexity); the sequence is AAALTGTPAAG.

This sequence belongs to the radical SAM superfamily. RlmN family. The cofactor is [4Fe-4S] cluster.

The protein resides in the cytoplasm. The enzyme catalyses adenosine(2503) in 23S rRNA + 2 reduced [2Fe-2S]-[ferredoxin] + 2 S-adenosyl-L-methionine = 2-methyladenosine(2503) in 23S rRNA + 5'-deoxyadenosine + L-methionine + 2 oxidized [2Fe-2S]-[ferredoxin] + S-adenosyl-L-homocysteine. It carries out the reaction adenosine(37) in tRNA + 2 reduced [2Fe-2S]-[ferredoxin] + 2 S-adenosyl-L-methionine = 2-methyladenosine(37) in tRNA + 5'-deoxyadenosine + L-methionine + 2 oxidized [2Fe-2S]-[ferredoxin] + S-adenosyl-L-homocysteine. Functionally, specifically methylates position 2 of adenine 2503 in 23S rRNA and position 2 of adenine 37 in tRNAs. m2A2503 modification seems to play a crucial role in the proofreading step occurring at the peptidyl transferase center and thus would serve to optimize ribosomal fidelity. This is Dual-specificity RNA methyltransferase RlmN from Anaeromyxobacter dehalogenans (strain 2CP-C).